The chain runs to 341 residues: Undecaprenyl-phosphate 4-deoxy-4-formamido-L-arabinose transferase (341 aa).

Helical transmembrane passes span 235-255 (LSIVGFSLAALGMLFAFALIV) and 269-289 (LFVLFAVLFVFTGGQFIGMGL).

Belongs to the glycosyltransferase 2 family.

The protein localises to the cell inner membrane. It carries out the reaction UDP-4-deoxy-4-formamido-beta-L-arabinose + di-trans,octa-cis-undecaprenyl phosphate = 4-deoxy-4-formamido-alpha-L-arabinopyranosyl di-trans,octa-cis-undecaprenyl phosphate + UDP. The protein operates within glycolipid biosynthesis; 4-amino-4-deoxy-alpha-L-arabinose undecaprenyl phosphate biosynthesis; 4-amino-4-deoxy-alpha-L-arabinose undecaprenyl phosphate from UDP-4-deoxy-4-formamido-beta-L-arabinose and undecaprenyl phosphate: step 1/2. It functions in the pathway bacterial outer membrane biogenesis; lipopolysaccharide biosynthesis. In terms of biological role, catalyzes the transfer of 4-deoxy-4-formamido-L-arabinose from UDP to undecaprenyl phosphate. The modified arabinose is attached to lipid A and is required for resistance to polymyxin and cationic antimicrobial peptides. This is Undecaprenyl-phosphate 4-deoxy-4-formamido-L-arabinose transferase from Pseudomonas fluorescens (strain SBW25).